We begin with the raw amino-acid sequence, 60 residues long: Sec-independent protein translocase protein TatA (60 aa).

Residues 1-21 (MAGLGVTELLIILAIVIVLFG) traverse the membrane as a helical segment.

Belongs to the TatA/E family. In terms of assembly, forms a complex with TatC.

The protein resides in the cell membrane. Functionally, part of the twin-arginine translocation (Tat) system that transports large folded proteins containing a characteristic twin-arginine motif in their signal peptide across membranes. TatA could form the protein-conducting channel of the Tat system. The polypeptide is Sec-independent protein translocase protein TatA (Herpetosiphon aurantiacus (strain ATCC 23779 / DSM 785 / 114-95)).